The sequence spans 428 residues: Trigger factor (428 aa).

The 86-residue stretch at Gly-163 to Pro-248 folds into the PPIase FKBP-type domain.

Belongs to the FKBP-type PPIase family. Tig subfamily.

The protein localises to the cytoplasm. The catalysed reaction is [protein]-peptidylproline (omega=180) = [protein]-peptidylproline (omega=0). Its function is as follows. Involved in protein export. Acts as a chaperone by maintaining the newly synthesized protein in an open conformation. Functions as a peptidyl-prolyl cis-trans isomerase. This Anoxybacillus flavithermus (strain DSM 21510 / WK1) protein is Trigger factor.